The primary structure comprises 650 residues: A-kinase anchor protein 10, mitochondrial (650 aa).

A mitochondrion-targeting transit peptide spans 1–16; sequence RALRPDPGPAMSFFRR. 2 disordered regions span residues 1–45 and 168–192; these read RALR…QKST and SSLA…ESLD. Phosphoserine is present on serine 40. RGS domains are found at residues 113–356 and 366–493; these read TLEQ…CKYQ and YLAD…YKYL. Serine 268 bears the Phosphoserine mark. The segment at 512–535 is disordered; sequence LAAQGSGGPPDDPLPGASDPSASQ. Over residues 525–535 the composition is skewed to low complexity; sequence LPGASDPSASQ. Positions 622-635 are PKA-RII subunit binding; that stretch reads LAWKIAKMIVSDVM.

It localises to the mitochondrion. It is found in the membrane. The protein resides in the cytoplasm. Differentially targeted protein that binds to type I and II regulatory subunits of protein kinase A and anchors them to the mitochondria or the plasma membrane. Although the physiological relevance between PKA and AKAPS with mitochondria is not fully understood, one idea is that BAD, a proapoptotic member, is phosphorylated and inactivated by mitochondria-anchored PKA. It cannot be excluded too that it may facilitate PKA as well as G protein signal transduction, by acting as an adapter for assembling multiprotein complexes. With its RGS domain, it could lead to the interaction to G-alpha proteins, providing a link between the signaling machinery and the downstream kinase. The chain is A-kinase anchor protein 10, mitochondrial (AKAP10) from Sus scrofa (Pig).